The following is a 62-amino-acid chain: Small ribosomal subunit protein bS21 (62 aa).

A compositionally biased stretch (basic and acidic residues) spans lysine 40–alanine 52. Positions lysine 40 to tyrosine 62 are disordered. The segment covering arginine 53 to tyrosine 62 has biased composition (basic residues).

This sequence belongs to the bacterial ribosomal protein bS21 family.

The sequence is that of Small ribosomal subunit protein bS21 from Limosilactobacillus fermentum (strain NBRC 3956 / LMG 18251) (Lactobacillus fermentum).